Consider the following 206-residue polypeptide: Interleukin-24 (206 aa).

The N-terminal stretch at 1 to 51 is a signal peptide; sequence MNFQQRLQSLWTLARPFCPPLLATASQMQMVVLPCLGFTLLLWSQVSGAQG. C59 and C106 are oxidised to a cystine. Residues N85 and N99 are each glycosylated (N-linked (GlcNAc...) asparagine). Residue K122 forms a Glycyl lysine isopeptide (Lys-Gly) (interchain with G-Cter in ubiquitin) linkage. N126 is a glycosylation site (N-linked (GlcNAc...) asparagine).

It belongs to the IL-10 family. In terms of processing, glycosylated. Ubiquitination at Lys-122 promotes proteasomal degradation. As to expression, up-regulated in melanoma cells induced to terminally differentiate.

It is found in the secreted. In terms of biological role, multifunctional cytokine mainly produced by T-cells that plays a regulatory role in immune response, tissue homeostasis, host defense, and oncogenesis. Possesses antiviral functions and induces the type I interferon response during influenza infection. Signals through two receptor complexes IL20RA/IL20RB or IL20RB/IL22RA1. In turn, stimulates the JAK1-STAT3 and MAPK pathways and promotes the secretion of pro-inflammatory mediators including IL8 and MMP1. Intracellularly, maintains endoplasmic reticulum homeostasis by restricting the eIF2alpha-CHOP pathway-mediated stress signal. In addition, acts as a quality control mechanism for the ubiquitin proteasome system by alerting the cell to proteasome dysfunction through activation of PKR/EIF2AK2. The protein is Interleukin-24 (IL24) of Homo sapiens (Human).